The chain runs to 957 residues: ERC protein 2 (957 aa).

The segment covering 1–13 (MYGSARTISNLEG) has biased composition (polar residues). The tract at residues 1–44 (MYGSARTISNLEGSPSRSPRLPRSPRLGHRRTSSGGGGGTGKTL) is disordered. Positions 14–25 (SPSRSPRLPRSP) are enriched in low complexity. S65 and S666 each carry phosphoserine. Residues 140–917 (RQVRDSTMLD…RMKLMADNYD (778 aa)) adopt a coiled-coil conformation. The span at 922 to 943 (HYHHHHHHHHHRSPGRSQHSNH) shows a compositional bias: basic residues. Residues 922-957 (HYHHHHHHHHHRSPGRSQHSNHRPSPDQDDEEGIWA) form a disordered region. Positions 948–957 (DQDDEEGIWA) are enriched in acidic residues.

In terms of assembly, interacts with BSN, ERC1, PPFIA1, PPFIA2, PPFIA3 and PPFIA4. Interacts through its C-terminus with the PDZ domain of RIMS1. Part of a complex consisting of ERC2, RIMS1 and UNC13A. In terms of tissue distribution, expressed throughout the central nervous system, including hippocampus, cortex, cerebellum and olfactory bulb.

The protein resides in the cytoplasm. Its subcellular location is the synapse. It localises to the presynaptic active zone. It is found in the cytoskeleton. Thought to be involved in the organization of the cytomatrix at the nerve terminals active zone (CAZ) which regulates neurotransmitter release. Seems to act together with BSN. May recruit liprin-alpha proteins to the CAZ. This chain is ERC protein 2 (Erc2), found in Mus musculus (Mouse).